The following is a 199-amino-acid chain: METIVLGVEPRVIKKKNAEKLRKNGIVPGVIYHKGEETIAISVNELALRKLVHSAESHIIDLQFPDGKIKRSFIKDVQFHPVTDRIIHTDFQLFSAEEIIELEVPVAVSGESAGVEKGGKLLIILHALTIKGKPEDMPDHLVVDVTALEIGHSIHVKEIPLDAYTGLQIMDDPDTPVITVLASKKEAEATPEAAVATAS.

This sequence belongs to the bacterial ribosomal protein bL25 family. CTC subfamily. Part of the 50S ribosomal subunit; part of the 5S rRNA/L5/L18/L25 subcomplex. Contacts the 5S rRNA. Binds to the 5S rRNA independently of L5 and L18.

In terms of biological role, this is one of the proteins that binds to the 5S RNA in the ribosome where it forms part of the central protuberance. This is Large ribosomal subunit protein bL25 from Pelodictyon phaeoclathratiforme (strain DSM 5477 / BU-1).